We begin with the raw amino-acid sequence, 220 residues long: 5'(3')-deoxyribonucleotidase, mitochondrial (220 aa).

Residues 1-23 constitute a mitochondrion transit peptide; that stretch reads MHRLRGCCARPRGAPLRAERSRA. Asp-33 serves as the catalytic Nucleophile. Positions 33 and 35 each coordinate Mg(2+). Asp-35 (proton donor) is an active-site residue. Residues Asp-35, Phe-41, Phe-67, Trp-68, Val-69, Trp-88, Thr-122, and Lys-157 each contribute to the substrate site. Asp-168 is a Mg(2+) binding site.

Belongs to the 5'(3')-deoxyribonucleotidase family. Homodimer. Requires Mg(2+) as cofactor.

The protein resides in the mitochondrion. Functionally, dephosphorylates specifically the 5' and 2'(3')-phosphates of uracil and thymine deoxyribonucleotides, and so protects mitochondrial DNA replication from excess dTTP. Has only marginal activity towards dIMP and dGMP. The polypeptide is 5'(3')-deoxyribonucleotidase, mitochondrial (Nt5m) (Mus musculus (Mouse)).